The chain runs to 158 residues: 6,7-dimethyl-8-ribityllumazine synthase (158 aa).

5-amino-6-(D-ribitylamino)uracil-binding positions include F22, 57-59 (AFE), and 81-83 (AVI). Position 86 to 87 (86 to 87 (GT)) interacts with (2S)-2-hydroxy-3-oxobutyl phosphate. Residue H89 is the Proton donor of the active site. F114 is a 5-amino-6-(D-ribitylamino)uracil binding site. (2S)-2-hydroxy-3-oxobutyl phosphate is bound at residue R128.

The protein belongs to the DMRL synthase family. Forms an icosahedral capsid composed of 60 subunits, arranged as a dodecamer of pentamers.

The catalysed reaction is (2S)-2-hydroxy-3-oxobutyl phosphate + 5-amino-6-(D-ribitylamino)uracil = 6,7-dimethyl-8-(1-D-ribityl)lumazine + phosphate + 2 H2O + H(+). Its pathway is cofactor biosynthesis; riboflavin biosynthesis; riboflavin from 2-hydroxy-3-oxobutyl phosphate and 5-amino-6-(D-ribitylamino)uracil: step 1/2. In terms of biological role, catalyzes the formation of 6,7-dimethyl-8-ribityllumazine by condensation of 5-amino-6-(D-ribitylamino)uracil with 3,4-dihydroxy-2-butanone 4-phosphate. This is the penultimate step in the biosynthesis of riboflavin. The chain is 6,7-dimethyl-8-ribityllumazine synthase from Shewanella amazonensis (strain ATCC BAA-1098 / SB2B).